Here is a 427-residue protein sequence, read N- to C-terminus: Glutamate-1-semialdehyde 2,1-aminomutase (427 aa).

At K265 the chain carries N6-(pyridoxal phosphate)lysine.

The protein belongs to the class-III pyridoxal-phosphate-dependent aminotransferase family. HemL subfamily. Homodimer. It depends on pyridoxal 5'-phosphate as a cofactor.

It is found in the cytoplasm. The catalysed reaction is (S)-4-amino-5-oxopentanoate = 5-aminolevulinate. It functions in the pathway porphyrin-containing compound metabolism; protoporphyrin-IX biosynthesis; 5-aminolevulinate from L-glutamyl-tRNA(Glu): step 2/2. The protein is Glutamate-1-semialdehyde 2,1-aminomutase of Pseudomonas paraeruginosa (strain DSM 24068 / PA7) (Pseudomonas aeruginosa (strain PA7)).